Reading from the N-terminus, the 321-residue chain is Lipoyl synthase (321 aa).

7 residues coordinate [4Fe-4S] cluster: Cys-68, Cys-73, Cys-79, Cys-94, Cys-98, Cys-101, and Ser-308. Positions 80 to 297 (FNHGTATFMI…KDVAMGLGFS (218 aa)) constitute a Radical SAM core domain.

This sequence belongs to the radical SAM superfamily. Lipoyl synthase family. [4Fe-4S] cluster is required as a cofactor.

Its subcellular location is the cytoplasm. The catalysed reaction is [[Fe-S] cluster scaffold protein carrying a second [4Fe-4S](2+) cluster] + N(6)-octanoyl-L-lysyl-[protein] + 2 oxidized [2Fe-2S]-[ferredoxin] + 2 S-adenosyl-L-methionine + 4 H(+) = [[Fe-S] cluster scaffold protein] + N(6)-[(R)-dihydrolipoyl]-L-lysyl-[protein] + 4 Fe(3+) + 2 hydrogen sulfide + 2 5'-deoxyadenosine + 2 L-methionine + 2 reduced [2Fe-2S]-[ferredoxin]. It functions in the pathway protein modification; protein lipoylation via endogenous pathway; protein N(6)-(lipoyl)lysine from octanoyl-[acyl-carrier-protein]: step 2/2. In terms of biological role, catalyzes the radical-mediated insertion of two sulfur atoms into the C-6 and C-8 positions of the octanoyl moiety bound to the lipoyl domains of lipoate-dependent enzymes, thereby converting the octanoylated domains into lipoylated derivatives. The polypeptide is Lipoyl synthase (Aeromonas hydrophila subsp. hydrophila (strain ATCC 7966 / DSM 30187 / BCRC 13018 / CCUG 14551 / JCM 1027 / KCTC 2358 / NCIMB 9240 / NCTC 8049)).